The primary structure comprises 252 residues: Floral homeotic protein AGAMOUS (252 aa).

A disordered region spans residues Met1–Gly20. The MADS-box domain maps to Arg19 to Tyr73. The stretch at Ala99 to Ile166 forms a coiled coil. One can recognise a K-box domain in the interval Ala103–Asn193.

As to quaternary structure, homodimer, capable of binding to CArG-box sequences. Forms a heterodimer via the K-box domain with either SEPALATTA1/AGL2, SEPALATTA2/AGL4, SEPALLATA3/AGL9 or AGL6. Heterodimerization also seen with some other Agamous-like MADS-box proteins. Interacts with AGL15 and AGL16. Component of a complex made of FLOR1, VSP1 and AGAMOUS (AG). Binds directly with FLR1. In terms of tissue distribution, detected early in the floral meristem but mostly expressed in stamen and carpel primordia.

The protein localises to the nucleus. Functionally, probable transcription factor involved in the control of organ identity during the early development of flowers. Is required for normal development of stamens and carpels in the wild-type flower. Plays a role in maintaining the determinacy of the floral meristem. Acts as C class cadastral protein by repressing the A class floral homeotic genes like APETALA1. Forms a heterodimer via the K-box domain with either SEPALATTA1/AGL2, SEPALATTA2/AGL4, SEPALLATA3/AGL9 or AGL6 that could be involved in genes regulation during floral meristem development. Controls AHL21/GIK, a multifunctional chromatin modifier in reproductive organ patterning and differentiation. Induces microsporogenesis through the activation of SPL/NZZ. The sequence is that of Floral homeotic protein AGAMOUS (AG) from Arabidopsis thaliana (Mouse-ear cress).